Here is a 126-residue protein sequence, read N- to C-terminus: Large ribosomal subunit protein bL17 (126 aa).

It belongs to the bacterial ribosomal protein bL17 family. As to quaternary structure, part of the 50S ribosomal subunit. Contacts protein L32.

The chain is Large ribosomal subunit protein bL17 from Lawsonia intracellularis (strain PHE/MN1-00).